Consider the following 299-residue polypeptide: Protease HtpX homolog (299 aa).

The next 2 helical transmembrane spans lie at I15–F35 and G39–F59. Residue H143 participates in Zn(2+) binding. E144 is an active-site residue. H147 serves as a coordination point for Zn(2+). 2 helical membrane passes run I158–W178 and I198–V218. A Zn(2+)-binding site is contributed by E227.

The protein belongs to the peptidase M48B family. It depends on Zn(2+) as a cofactor.

The protein resides in the cell membrane. This chain is Protease HtpX homolog, found in Streptococcus pneumoniae (strain Taiwan19F-14).